A 234-amino-acid chain; its full sequence is Polycomb group RING finger protein 5-A (234 aa).

An RING-type zinc finger spans residues 18–57 (CSICRGYLIKPTAVTECLHTFCKSCIVQHFEESNECPECG). A disordered region spans residues 97-130 (FWRKHKIKSNGEDGPRAKKSRLSGEDDDGNGGDY).

Component of a PRC1-like complex.

Its subcellular location is the nucleus. Functionally, component of Polycomb group (PcG) multiprotein complexes; the complex class is required to maintain the transcriptionally repressive state of some genes. The chain is Polycomb group RING finger protein 5-A from Danio rerio (Zebrafish).